A 435-amino-acid polypeptide reads, in one-letter code: Protein deadpan (435 aa).

A compositionally biased stretch (low complexity) spans 18 to 27 (GYSDSYGSNG). The disordered stretch occupies residues 18-48 (GYSDSYGSNGRMSNPNGLSKAELRKTNKPIM). One can recognise a bHLH domain in the interval 40 to 97 (LRKTNKPIMEKRRRARINHCLNELKSLILEAMKKDPARHTKLEKADILEMTVKHLQSV). In terms of domain architecture, Orange spans 116–149 (FKTGFVECAEEVNRYVSQMDGIDTGVRQRLSAHL). Disordered regions lie at residues 305-334 (QLPV…AASP) and 349-416 (STPP…DEPS). Low complexity predominate over residues 311-324 (STSPPLSPISSISS). Composition is skewed to polar residues over residues 355–378 (SAET…SSGC) and 385–395 (LQQQQVSSTSG). 3 positions are modified to phosphoserine: Ser-407, Ser-408, and Ser-411. The WRPW motif signature appears at 432–435 (WRPW).

Homodimer. Heterodimer with E(spl)mgamma-HLH and E(spl). Transcription repression requires formation of a complex with the corepressor protein Groucho. Interacts (via bHLH motif) with sisA. Interacts with da.

It localises to the nucleus. Transcriptional repressor of genes that require a bHLH protein for their transcription. In the larval brain, required to maintain the self-renewal and identity of type II neuroblasts by regulating the expression of the transcriptional repressor erm together with other self-renewal transcriptional repressors such as klu and E(spl)mgamma-HLH. As part of its role in neuroblasts development, has been shown to be a direct target of the Notch signaling pathway, however might work also independently of N/Notch. In the developing larval and pupal brain, required for mushroom body differentiation. Involved in sex determination and SXL transcription repression when in complex with the corepressor protein Groucho. The chain is Protein deadpan (dpn) from Drosophila melanogaster (Fruit fly).